The sequence spans 341 residues: GDT1-like protein 1, chloroplastic (341 aa).

The segment covering 1 to 13 (MASVASSTVFASS) has biased composition (low complexity). Disordered stretches follow at residues 1-41 (MASV…GRSV) and 54-76 (VVTR…GGGR). A chloroplast-targeting transit peptide spans 1 to 57 (MASVASSTVFASSLPHHRATTRAPPTPPRIPRRARLPGRSVVSCLPKRGSEKLVVTR). 7 helical membrane-spanning segments follow: residues 79–99 (PSLD…VLML), 117–137 (VVGD…LIFF), 158–178 (AIIF…SVVL), 203–223 (FLAA…AASG), 246–266 (GAGI…VFIA), 286–306 (LGVI…AVLG), and 318–338 (IVAY…LVEI).

It belongs to the GDT1 family.

It is found in the plastid. Its subcellular location is the chloroplast membrane. The polypeptide is GDT1-like protein 1, chloroplastic (Oryza sativa subsp. indica (Rice)).